The chain runs to 142 residues: Large ribosomal subunit protein uL16 (142 aa).

This sequence belongs to the universal ribosomal protein uL16 family. As to quaternary structure, part of the 50S ribosomal subunit.

Its function is as follows. Binds 23S rRNA and is also seen to make contacts with the A and possibly P site tRNAs. The protein is Large ribosomal subunit protein uL16 of Aquifex aeolicus (strain VF5).